A 460-amino-acid chain; its full sequence is Argininosuccinate lyase (460 aa).

Belongs to the lyase 1 family. Argininosuccinate lyase subfamily.

The protein resides in the cytoplasm. The enzyme catalyses 2-(N(omega)-L-arginino)succinate = fumarate + L-arginine. Its pathway is amino-acid biosynthesis; L-arginine biosynthesis; L-arginine from L-ornithine and carbamoyl phosphate: step 3/3. This Mannheimia succiniciproducens (strain KCTC 0769BP / MBEL55E) protein is Argininosuccinate lyase.